Consider the following 579-residue polypeptide: UPF0329 protein ECU06_1620 (579 aa).

Disordered stretches follow at residues 325–360 (EEKA…GEEA) and 370–389 (ARRK…KIHK). Over residues 329–338 (KGRKDGKKKS) the composition is skewed to basic residues. The span at 345-360 (KEEESETEEVEAGEEA) shows a compositional bias: acidic residues.

It belongs to the UPF0329 family.

This chain is UPF0329 protein ECU06_1620, found in Encephalitozoon cuniculi (strain GB-M1) (Microsporidian parasite).